We begin with the raw amino-acid sequence, 141 residues long: Nucleoside diphosphate kinase (141 aa).

The ATP site is built by lysine 11, phenylalanine 59, arginine 87, threonine 93, arginine 104, and asparagine 114. Catalysis depends on histidine 117, which acts as the Pros-phosphohistidine intermediate.

The protein belongs to the NDK family. As to quaternary structure, homotetramer. It depends on Mg(2+) as a cofactor.

The protein resides in the cytoplasm. The enzyme catalyses a 2'-deoxyribonucleoside 5'-diphosphate + ATP = a 2'-deoxyribonucleoside 5'-triphosphate + ADP. It catalyses the reaction a ribonucleoside 5'-diphosphate + ATP = a ribonucleoside 5'-triphosphate + ADP. Functionally, major role in the synthesis of nucleoside triphosphates other than ATP. The ATP gamma phosphate is transferred to the NDP beta phosphate via a ping-pong mechanism, using a phosphorylated active-site intermediate. The sequence is that of Nucleoside diphosphate kinase from Paracidovorax citrulli (strain AAC00-1) (Acidovorax citrulli).